The chain runs to 387 residues: 3-hydroxyisobutyryl-CoA hydrolase-like protein 5 (387 aa).

Ala-2 bears the N-acetylalanine mark.

The protein belongs to the enoyl-CoA hydratase/isomerase family.

This is 3-hydroxyisobutyryl-CoA hydrolase-like protein 5 from Arabidopsis thaliana (Mouse-ear cress).